The sequence spans 472 residues: Ribulose bisphosphate carboxylase large chain (472 aa).

N120 and T170 together coordinate substrate. K172 (proton acceptor) is an active-site residue. Residue K174 coordinates substrate. Mg(2+) contacts are provided by K198, D200, and E201. At K198 the chain carries N6-carboxylysine. H291 functions as the Proton acceptor in the catalytic mechanism. R292, H324, and S376 together coordinate substrate.

The protein belongs to the RuBisCO large chain family. Type I subfamily. In terms of assembly, heterohexadecamer of 8 large chains and 8 small chains. It depends on Mg(2+) as a cofactor.

It is found in the carboxysome. The catalysed reaction is 2 (2R)-3-phosphoglycerate + 2 H(+) = D-ribulose 1,5-bisphosphate + CO2 + H2O. The enzyme catalyses D-ribulose 1,5-bisphosphate + O2 = 2-phosphoglycolate + (2R)-3-phosphoglycerate + 2 H(+). Functionally, ruBisCO catalyzes two reactions: the carboxylation of D-ribulose 1,5-bisphosphate, the primary event in carbon dioxide fixation, as well as the oxidative fragmentation of the pentose substrate in the photorespiration process. Both reactions occur simultaneously and in competition at the same active site. The chain is Ribulose bisphosphate carboxylase large chain from Gloeothece citriformis (strain PCC 7424) (Cyanothece sp. (strain PCC 7424)).